Reading from the N-terminus, the 96-residue chain is Co-chaperonin GroES (96 aa).

The protein belongs to the GroES chaperonin family. Heptamer of 7 subunits arranged in a ring. Interacts with the chaperonin GroEL.

It is found in the cytoplasm. Together with the chaperonin GroEL, plays an essential role in assisting protein folding. The GroEL-GroES system forms a nano-cage that allows encapsulation of the non-native substrate proteins and provides a physical environment optimized to promote and accelerate protein folding. GroES binds to the apical surface of the GroEL ring, thereby capping the opening of the GroEL channel. The polypeptide is Co-chaperonin GroES (Pelagibacter ubique (strain HTCC1062)).